A 376-amino-acid polypeptide reads, in one-letter code: Phosphoserine aminotransferase (376 aa).

Arginine 42 contacts L-glutamate. The pyridoxal 5'-phosphate site is built by tryptophan 104, threonine 163, aspartate 188, and glutamine 211. At lysine 212 the chain carries N6-(pyridoxal phosphate)lysine. 253 to 254 (NT) is a binding site for pyridoxal 5'-phosphate.

This sequence belongs to the class-V pyridoxal-phosphate-dependent aminotransferase family. SerC subfamily. As to quaternary structure, homodimer. Pyridoxal 5'-phosphate serves as cofactor.

The protein resides in the cytoplasm. The catalysed reaction is O-phospho-L-serine + 2-oxoglutarate = 3-phosphooxypyruvate + L-glutamate. It catalyses the reaction 4-(phosphooxy)-L-threonine + 2-oxoglutarate = (R)-3-hydroxy-2-oxo-4-phosphooxybutanoate + L-glutamate. It functions in the pathway amino-acid biosynthesis; L-serine biosynthesis; L-serine from 3-phospho-D-glycerate: step 2/3. It participates in cofactor biosynthesis; pyridoxine 5'-phosphate biosynthesis; pyridoxine 5'-phosphate from D-erythrose 4-phosphate: step 3/5. Catalyzes the reversible conversion of 3-phosphohydroxypyruvate to phosphoserine and of 3-hydroxy-2-oxo-4-phosphonooxybutanoate to phosphohydroxythreonine. This Bordetella avium (strain 197N) protein is Phosphoserine aminotransferase.